The primary structure comprises 900 residues: Formin-like protein 5 (900 aa).

Residues Ser15 to Leu32 traverse the membrane as a helical; Signal-anchor segment. The segment at Arg136–Asp209 is disordered. A compositionally biased stretch (pro residues) spans Pro160–Arg173. The helical transmembrane segment at Ile214–Leu234 threads the bilayer. Disordered regions lie at residues Ser273–Lys440 and Ala849–Asp900. Positions His281 to Ser304 are enriched in polar residues. A compositionally biased stretch (basic and acidic residues) spans Leu307–Leu316. The span at Phe359–Ser368 shows a compositional bias: low complexity. Pro residues predominate over residues Ala369–Gly429. The 433-residue stretch at Ala433–Ser865 folds into the FH2 domain. The segment covering Gln860–Ser876 has biased composition (polar residues).

The protein belongs to the formin-like family. Class-I subfamily. As to expression, expressed in the endosperm. Localizes to the cell plate, a plant-specific membranous component that is assembled at the plane of cell division.

Its subcellular location is the membrane. Might be involved in the organization and polarity of the actin cytoskeleton. Interacts with the barbed end of actin filaments and nucleates actin-filament polymerization in vitro. Seems to play a role in cytokinesis. The chain is Formin-like protein 5 (FH5) from Arabidopsis thaliana (Mouse-ear cress).